The following is a 264-amino-acid chain: ATP synthase subunit a (264 aa).

Helical transmembrane passes span 30–50, 90–110, 111–131, 134–154, 177–197, 208–228, and 235–255; these read WNID…WLFY, IAPL…MDMI, PVDW…KVVP, DVNI…YYSI, IPVN…SLAL, LIFI…ALGV, and LIFH…LTIV.

The protein belongs to the ATPase A chain family. In terms of assembly, F-type ATPases have 2 components, CF(1) - the catalytic core - and CF(0) - the membrane proton channel. CF(1) has five subunits: alpha(3), beta(3), gamma(1), delta(1), epsilon(1). CF(0) has three main subunits: a(1), b(2) and c(9-12). The alpha and beta chains form an alternating ring which encloses part of the gamma chain. CF(1) is attached to CF(0) by a central stalk formed by the gamma and epsilon chains, while a peripheral stalk is formed by the delta and b chains.

The protein resides in the cell inner membrane. In terms of biological role, key component of the proton channel; it plays a direct role in the translocation of protons across the membrane. The polypeptide is ATP synthase subunit a (Shewanella frigidimarina (strain NCIMB 400)).